The primary structure comprises 235 residues: MSVHIEAKQGEIAESILLPGDPLRAKYIAETFLEDVTCYNNVRGMLGFTGTYKGKRVSVQGTGMGVPSISIYVNELIQSYGVKNLIRVGTCGAIQKDVKVRDVIIAMTACTDSNINRLTFPGFDFAPAANFDLLKKAYDAGTEKGLHIRVGNVLTADVFYRESMDMVKKLGDYGVLAVEMETTALYTLAAKYGVNALSVLTVSDHIFTGEETTAEERQTTFNEMIEIALEAAIQQ.

H4 is an a purine D-ribonucleoside binding site. Residues G20, R24, R43, and 87-90 each bind phosphate; that span reads RVGT. Residues E162, 179-181, and 203-204 contribute to the a purine D-ribonucleoside site; these read EME and SD. Catalysis depends on D204, which acts as the Proton donor.

This sequence belongs to the PNP/UDP phosphorylase family. Homohexamer; trimer of homodimers.

It catalyses the reaction a purine D-ribonucleoside + phosphate = a purine nucleobase + alpha-D-ribose 1-phosphate. The catalysed reaction is a purine 2'-deoxy-D-ribonucleoside + phosphate = a purine nucleobase + 2-deoxy-alpha-D-ribose 1-phosphate. In terms of biological role, catalyzes the reversible phosphorolytic breakdown of the N-glycosidic bond in the beta-(deoxy)ribonucleoside molecules, with the formation of the corresponding free purine bases and pentose-1-phosphate. The chain is Purine nucleoside phosphorylase DeoD-type from Bacillus cytotoxicus (strain DSM 22905 / CIP 110041 / 391-98 / NVH 391-98).